We begin with the raw amino-acid sequence, 469 residues long: 6-phosphofructo-2-kinase/fructose-2,6-bisphosphatase 4 (469 aa).

The segment at 1-249 (MASPRELTQN…YYLMNIHVTP (249 aa)) is 6-phosphofructo-2-kinase. 46–54 (GLPARGKTY) lines the ATP pocket. Beta-D-fructose 6-phosphate contacts are provided by arginine 79 and arginine 103. The active site involves aspartate 129. Residues threonine 131 and arginine 137 each contribute to the beta-D-fructose 6-phosphate site. Cysteine 159 is an active-site residue. 168–173 (NIVQVK) lines the ATP pocket. Residues lysine 173, arginine 194, and tyrosine 198 each coordinate beta-D-fructose 6-phosphate. Residues 250-469 (RSIYLCRHGE…EALVTVPAHQ (220 aa)) are fructose-2,6-bisphosphatase. Arginine 256 serves as a coordination point for beta-D-fructose 2,6-bisphosphate. Histidine 257 (tele-phosphohistidine intermediate) is an active-site residue. 3 residues coordinate beta-D-fructose 2,6-bisphosphate: asparagine 263, glycine 269, and arginine 306. Glutamate 326 acts as the Proton donor/acceptor in catalysis. Positions 337, 351, 355, 366, 392, and 396 each coordinate beta-D-fructose 2,6-bisphosphate. 348–351 (FALR) is a binding site for ATP. ATP is bound by residues 392–396 (QAVMR) and tyrosine 428. Position 444 is a phosphothreonine; by PKC (threonine 444).

It in the C-terminal section; belongs to the phosphoglycerate mutase family. As to quaternary structure, homodimer.

The catalysed reaction is beta-D-fructose 2,6-bisphosphate + H2O = beta-D-fructose 6-phosphate + phosphate. The enzyme catalyses beta-D-fructose 6-phosphate + ATP = beta-D-fructose 2,6-bisphosphate + ADP + H(+). With respect to regulation, the most important regulatory mechanism of these opposing activities is by phosphorylation and dephosphorylation of the enzyme. Functionally, synthesis and degradation of fructose 2,6-bisphosphate. This is 6-phosphofructo-2-kinase/fructose-2,6-bisphosphatase 4 (PFKFB4) from Macaca fascicularis (Crab-eating macaque).